The primary structure comprises 423 residues: Levansucrase (423 aa).

Residues tryptophan 47, aspartate 48, serine 119, arginine 193, and aspartate 194 each contribute to the sucrose site. The Nucleophile role is filled by aspartate 48. Residue glutamate 278 is the Proton donor/acceptor of the active site.

It belongs to the glycosyl hydrolase 68 family.

It localises to the secreted. The enzyme catalyses [6)-beta-D-fructofuranosyl-(2-&gt;](n) alpha-D-glucopyranoside + sucrose = [6)-beta-D-fructofuranosyl-(2-&gt;](n+1) alpha-D-glucopyranoside + D-glucose. Its function is as follows. Catalyzes the synthesis of levan, a fructose polymer, by transferring the fructosyl moiety from sucrose to a growing acceptor molecule. In Zymomonas mobilis subsp. mobilis (strain ATCC 10988 / DSM 424 / LMG 404 / NCIMB 8938 / NRRL B-806 / ZM1), this protein is Levansucrase.